Consider the following 445-residue polypeptide: UDP-N-acetylmuramoylalanine--D-glutamate ligase (445 aa).

Glycine 110–threonine 116 is an ATP binding site.

It belongs to the MurCDEF family.

Its subcellular location is the cytoplasm. It catalyses the reaction UDP-N-acetyl-alpha-D-muramoyl-L-alanine + D-glutamate + ATP = UDP-N-acetyl-alpha-D-muramoyl-L-alanyl-D-glutamate + ADP + phosphate + H(+). It participates in cell wall biogenesis; peptidoglycan biosynthesis. Functionally, cell wall formation. Catalyzes the addition of glutamate to the nucleotide precursor UDP-N-acetylmuramoyl-L-alanine (UMA). This is UDP-N-acetylmuramoylalanine--D-glutamate ligase from Christiangramia forsetii (strain DSM 17595 / CGMCC 1.15422 / KT0803) (Gramella forsetii).